The primary structure comprises 259 residues: MWRRVALLSPMISSSSRSLKLSQAASGLKVGESFATDIISQEERVSPPKEKAPFITFVLGGPGSGKGTQCEKIVETFGLQHLSAGDLLRREIAMHTENGAMILNLIKDGKIVPSEVTVKLIQKELESSDNRKFLIDGFPRTEENRVAFERIIRADPDVVLFFDCPEEEMVKRVLNRNQGRIDDNITTMKKRLKIFNALNRPVIDYYKNKGKLYTINAVGTVDDIFQHVLPIFNSFEQLKESSHVNPQSHLGSSLVENSS.

63-68 (GSGKGT) contributes to the ATP binding site. An NMP region spans residues 83-112 (SAGDLLRREIAMHTENGAMILNLIKDGKIV). A ribonucleoside 5'-phosphate is bound by residues R89, 110–112 (KIV), and 137–140 (GFPR). Position 144 (N144) interacts with CMP. Positions 175–183 (NRNQGRIDD) are LID. R176 contacts ATP. A ribonucleoside 5'-phosphate is bound by residues R180 and R191. ATP is bound at residue G219.

This sequence belongs to the adenylate kinase family. UMP-CMP kinase subfamily. Monomer. Requires Mg(2+) as cofactor.

It is found in the cytoplasm. It localises to the nucleus. It carries out the reaction CMP + ATP = CDP + ADP. The catalysed reaction is dCMP + ATP = dCDP + ADP. It catalyses the reaction UMP + ATP = UDP + ADP. Functionally, catalyzes the phosphorylation of pyrimidine nucleoside monophosphates at the expense of ATP. Plays an important role in de novo pyrimidine nucleotide biosynthesis. Has preference for UMP and CMP as phosphate acceptors. This chain is Probable UMP-CMP kinase 2 (UMK2), found in Arabidopsis thaliana (Mouse-ear cress).